We begin with the raw amino-acid sequence, 142 residues long: Large ribosomal subunit protein uL11 (142 aa).

It belongs to the universal ribosomal protein uL11 family. Part of the ribosomal stalk of the 50S ribosomal subunit. Interacts with L10 and the large rRNA to form the base of the stalk. L10 forms an elongated spine to which L12 dimers bind in a sequential fashion forming a multimeric L10(L12)X complex. One or more lysine residues are methylated.

Forms part of the ribosomal stalk which helps the ribosome interact with GTP-bound translation factors. This Yersinia pseudotuberculosis serotype O:1b (strain IP 31758) protein is Large ribosomal subunit protein uL11.